We begin with the raw amino-acid sequence, 306 residues long: tRNA dimethylallyltransferase (306 aa).

An ATP-binding site is contributed by 12–19 (GPTASGKT). 14-19 (TASGKT) provides a ligand contact to substrate. 3 interaction with substrate tRNA regions span residues 37–40 (DSAL), 161–165 (QRLSR), and 242–247 (RCVGYR).

Belongs to the IPP transferase family. In terms of assembly, monomer. The cofactor is Mg(2+).

It catalyses the reaction adenosine(37) in tRNA + dimethylallyl diphosphate = N(6)-dimethylallyladenosine(37) in tRNA + diphosphate. In terms of biological role, catalyzes the transfer of a dimethylallyl group onto the adenine at position 37 in tRNAs that read codons beginning with uridine, leading to the formation of N6-(dimethylallyl)adenosine (i(6)A). In Shewanella amazonensis (strain ATCC BAA-1098 / SB2B), this protein is tRNA dimethylallyltransferase.